Consider the following 345-residue polypeptide: S-adenosylmethionine:tRNA ribosyltransferase-isomerase (345 aa).

This sequence belongs to the QueA family. In terms of assembly, monomer.

It is found in the cytoplasm. The enzyme catalyses 7-aminomethyl-7-carbaguanosine(34) in tRNA + S-adenosyl-L-methionine = epoxyqueuosine(34) in tRNA + adenine + L-methionine + 2 H(+). Its pathway is tRNA modification; tRNA-queuosine biosynthesis. Functionally, transfers and isomerizes the ribose moiety from AdoMet to the 7-aminomethyl group of 7-deazaguanine (preQ1-tRNA) to give epoxyqueuosine (oQ-tRNA). The chain is S-adenosylmethionine:tRNA ribosyltransferase-isomerase from Thermus thermophilus (strain ATCC BAA-163 / DSM 7039 / HB27).